A 631-amino-acid chain; its full sequence is Tumor protein p73 (631 aa).

Residues methionine 1–glutamate 43 are transactivation. Disordered regions lie at residues serine 23–glutamate 43 and serine 69–tyrosine 113. Threonine 24 is modified (phosphothreonine; by PLK1). Tyrosine 25 is subject to Phosphotyrosine; by SRC and HCK. Polar residues-rich tracts occupy residues glutamine 30–glutamate 43 and proline 86–threonine 100. Phosphotyrosine; by ABL1 is present on tyrosine 91. Positions phenylalanine 123–arginine 302 are DNA-binding. Zn(2+) is bound by residues cysteine 186, histidine 189, cysteine 250, and cysteine 254. The span at alanine 306–glycine 315 shows a compositional bias: polar residues. A disordered region spans residues alanine 306–threonine 334. The interaction with HIPK2 stretch occupies residues lysine 337 to leucine 372. The segment at lysine 337 to valine 378 is oligomerization. The short motif at proline 477–tyrosine 481 is the PPxY motif element. The region spanning proline 479–serine 545 is the SAM domain. Lysine 622 is covalently cross-linked (Glycyl lysine isopeptide (Lys-Gly) (interchain with G-Cter in SUMO); alternate). Residue lysine 622 forms a Glycyl lysine isopeptide (Lys-Gly) (interchain with G-Cter in SUMO2); alternate linkage.

Belongs to the p53 family. In terms of assembly, found in a complex with p53/TP53 and CABLES1. The C-terminal oligomerization domain binds to the ABL1 tyrosine kinase SH3 domain. Interacts with HECW2, HIPK2, RANBP9 and WWOX. Interacts (via SAM domain) with FBXO45 (via B30.2/SPRY domain). Interacts with YAP1 (phosphorylated form). Interacts with HCK (via SH3 domain); this inhibits TP73 activity and degradation. Interacts (via SAM domain) with NQO1; this interaction is NADH-dependent, stabilizes TP73 in response to oxidative stress and protects it from ubiquitin-independent degradation by the 20S proteasome. Requires Zn(2+) as cofactor. Sumoylated on Lys-622, which potentiates proteasomal degradation but does not affect transcriptional activity. Post-translationally, phosphorylation by PLK1 and PLK3 inhibits the transcription regulator activity and pro-apoptotic function. Higher levels of phosphorylation seen in striatal neurons of. mutant huntingtin (htt) transgenic mice. In terms of processing, polyubiquitinated by RCHY1/PIRH2; leading to its degradation by the proteasome. As to expression, found in striatal neurons of mutant huntingtin (htt) transgenic mice (at protein level). Isoform 1 is expressed in the nasal epithelium, the vomeronasal organ, the hippocampus and the hypothalamus.

The protein resides in the nucleus. It is found in the cytoplasm. Participates in the apoptotic response to DNA damage. Isoforms containing the transactivation domain are pro-apoptotic, isoforms lacking the domain are anti-apoptotic and block the function of p53 and transactivating p73 isoforms. May be a tumor suppressor protein. Is an activator of FOXJ1 expression, essential for the positive regulation of lung ciliated cell differentiation. The sequence is that of Tumor protein p73 (Tp73) from Mus musculus (Mouse).